The sequence spans 545 residues: Glutamyl-tRNA(Gln) amidotransferase subunit B-1, chloroplastic/mitochondrial (545 aa).

It belongs to the GatB/GatE family. GatB subfamily. In terms of assembly, subunit of the heterotrimeric GatCAB amidotransferase (AdT) complex, composed of A, B and C subunits.

The protein resides in the mitochondrion. The protein localises to the plastid. Its subcellular location is the chloroplast. The enzyme catalyses L-glutamyl-tRNA(Gln) + L-glutamine + ATP + H2O = L-glutaminyl-tRNA(Gln) + L-glutamate + ADP + phosphate + H(+). In terms of biological role, allows the formation of correctly charged Gln-tRNA(Gln) through the transamidation of misacylated Glu-tRNA(Gln) in chloroplasts and mitochondria. The reaction takes place in the presence of glutamine and ATP through an activated gamma-phospho-Glu-tRNA(Gln). In Micromonas pusilla (strain CCMP1545) (Picoplanktonic green alga), this protein is Glutamyl-tRNA(Gln) amidotransferase subunit B-1, chloroplastic/mitochondrial.